Reading from the N-terminus, the 447-residue chain is tRNA threonylcarbamoyladenosine dehydratase 2 (447 aa).

3 consecutive transmembrane segments (helical) span residues Leu9 to Thr29, Asn86 to Val106, and Ile294 to Leu314.

It belongs to the HesA/MoeB/ThiF family.

Its subcellular location is the mitochondrion outer membrane. In terms of biological role, catalyzes the ATP-dependent dehydration of threonylcarbamoyladenosine at position 37 (t(6)A37) to form cyclic t(6)A37 (ct(6)A37) in tRNAs that read codons beginning with adenine. The protein is tRNA threonylcarbamoyladenosine dehydratase 2 (TCD2) of Saccharomyces cerevisiae (strain ATCC 204508 / S288c) (Baker's yeast).